The chain runs to 420 residues: DNA replication and repair protein RecF (420 aa).

30–37 lines the ATP pocket; it reads GRNGQGKT. The tract at residues 175–214 is disordered; that stretch reads RKGGFARKGGFAPLGPPEGRPEGPPEGRTGGSATSGPPSR.

Belongs to the RecF family.

The protein resides in the cytoplasm. Functionally, the RecF protein is involved in DNA metabolism; it is required for DNA replication and normal SOS inducibility. RecF binds preferentially to single-stranded, linear DNA. It also seems to bind ATP. This Nocardioides sp. (strain ATCC BAA-499 / JS614) protein is DNA replication and repair protein RecF.